The sequence spans 236 residues: Endonuclease NucS (236 aa).

Belongs to the NucS endonuclease family.

The protein localises to the cytoplasm. Functionally, cleaves both 3' and 5' ssDNA extremities of branched DNA structures. The chain is Endonuclease NucS from Saccharolobus solfataricus (strain ATCC 35092 / DSM 1617 / JCM 11322 / P2) (Sulfolobus solfataricus).